Here is a 104-residue protein sequence, read N- to C-terminus: Putative heat shock protein PS1 (104 aa).

Asn-11 and Asn-18 each carry an N-linked (GlcNAc...) asparagine glycan. Residue Asn-18 coordinates ATP.

This sequence belongs to the heat shock protein 90 family. In terms of assembly, homodimer.

The protein resides in the cytoplasm. Its function is as follows. Putative molecular chaperone that may promote the maturation, structural maintenance and proper regulation of specific target proteins. This chain is Putative heat shock protein PS1, found in Pinus strobus (Eastern white pine).